Consider the following 212-residue polypeptide: Imidazole glycerol phosphate synthase subunit HisH (212 aa).

In terms of domain architecture, Glutamine amidotransferase type-1 spans 2 to 212 (RVVVIDYNGG…ILGNFLRWTS (211 aa)). C85 functions as the Nucleophile in the catalytic mechanism. Residues H192 and E194 contribute to the active site.

In terms of assembly, heterodimer of HisH and HisF.

It localises to the cytoplasm. The enzyme catalyses 5-[(5-phospho-1-deoxy-D-ribulos-1-ylimino)methylamino]-1-(5-phospho-beta-D-ribosyl)imidazole-4-carboxamide + L-glutamine = D-erythro-1-(imidazol-4-yl)glycerol 3-phosphate + 5-amino-1-(5-phospho-beta-D-ribosyl)imidazole-4-carboxamide + L-glutamate + H(+). It catalyses the reaction L-glutamine + H2O = L-glutamate + NH4(+). It participates in amino-acid biosynthesis; L-histidine biosynthesis; L-histidine from 5-phospho-alpha-D-ribose 1-diphosphate: step 5/9. IGPS catalyzes the conversion of PRFAR and glutamine to IGP, AICAR and glutamate. The HisH subunit catalyzes the hydrolysis of glutamine to glutamate and ammonia as part of the synthesis of IGP and AICAR. The resulting ammonia molecule is channeled to the active site of HisF. The sequence is that of Imidazole glycerol phosphate synthase subunit HisH from Gluconobacter oxydans (strain 621H) (Gluconobacter suboxydans).